Consider the following 232-residue polypeptide: U-scoloptoxin(11)-Ssd2a (232 aa).

Residues methionine 1–glycine 21 form the signal peptide. Positions lysine 22–arginine 32 are excised as a propeptide.

In terms of processing, contains 8 disulfide bonds. Expressed by the venom gland.

The protein resides in the secreted. The polypeptide is U-scoloptoxin(11)-Ssd2a (Scolopendra dehaani (Thai centipede)).